Here is a 560-residue protein sequence, read N- to C-terminus: Transcription termination factor 5, mitochondrial (560 aa).

The transit peptide at 1 to 23 (MLRNGQNQAQLLARSLGQLARGM) directs the protein to the mitochondrion. Positions 23–47 (MASSKRVSSKKEDLKPKLPKPPTVE) are disordered.

Belongs to the mTERF family. In terms of assembly, probably binds to the mTTF-DNA complex.

It localises to the mitochondrion. In terms of biological role, binds promoter DNA and regulates initiation of transcription. Regulates mitochondrial replication and transcription. Required for normal topology and maintenance of mitochondrial DNA (mtDNA) levels. Regulates mtDNA replication by re-activating replication after replication pausing. Likely to regulate replication pausing by coordinating with the mitochondrial termination factor mTTF which promotes replication pausing. Their function in replication pausing prevents unregulated replication that may occur for example by collisions between the machineries of DNA replication and transcription during mtDNA synthesis. This ensures the incorporation of RNA transcripts into replication intermediates at the replication fork and allows for proper fork progression. Possibly functions downstream of Dref which activates genes involved in mtDNA replication and maintenance. The protein is Transcription termination factor 5, mitochondrial of Drosophila melanogaster (Fruit fly).